The primary structure comprises 349 residues: Phenylalanine--tRNA ligase alpha subunit (349 aa).

Glutamate 259 is a binding site for Mg(2+).

This sequence belongs to the class-II aminoacyl-tRNA synthetase family. Phe-tRNA synthetase alpha subunit type 1 subfamily. As to quaternary structure, tetramer of two alpha and two beta subunits. Requires Mg(2+) as cofactor.

The protein localises to the cytoplasm. The catalysed reaction is tRNA(Phe) + L-phenylalanine + ATP = L-phenylalanyl-tRNA(Phe) + AMP + diphosphate + H(+). The protein is Phenylalanine--tRNA ligase alpha subunit of Lactobacillus johnsonii (strain CNCM I-12250 / La1 / NCC 533).